Here is a 201-residue protein sequence, read N- to C-terminus: Small ribosomal subunit protein uS4 (201 aa).

Residues 22–47 are disordered; the sequence is TGKELARRPYAPGDHGNDRRGKLSEY. The S4 RNA-binding domain occupies 93 to 153; it reads RRLDNMVYRL…EKSKNLDVIK (61 aa).

It belongs to the universal ribosomal protein uS4 family. In terms of assembly, part of the 30S ribosomal subunit. Contacts protein S5. The interaction surface between S4 and S5 is involved in control of translational fidelity.

In terms of biological role, one of the primary rRNA binding proteins, it binds directly to 16S rRNA where it nucleates assembly of the body of the 30S subunit. Functionally, with S5 and S12 plays an important role in translational accuracy. This is Small ribosomal subunit protein uS4 from Limosilactobacillus fermentum (strain NBRC 3956 / LMG 18251) (Lactobacillus fermentum).